A 441-amino-acid polypeptide reads, in one-letter code: Eukaryotic translation initiation factor 3 subunit E (441 aa).

In terms of domain architecture, PCI spans 223–407 (IFFNHDNGRT…GTVIMEPTQP (185 aa)).

It belongs to the eIF-3 subunit E family. As to quaternary structure, component of the eukaryotic translation initiation factor 3 (eIF-3) complex (Potential). Binds to the translation initiation factors TIF3F1 and TIF3H1. Associates with the CSN (COP9 signalosome) complex. Interacts directly with CSN1, CSN4, CSN6A, CSN6B, CSN7, CSN8 and TIF3C1. Binds to 40S small ribosomal subunit S9 (RPS9B and RPS9C) via its N-terminal part. Interacts with the 26S proteasome subunit RPN12a via its C-terminal part. Also binds with At1g27930 and At4g30620.

It localises to the cytoplasm. The protein localises to the nucleus. Functionally, component of the eukaryotic translation initiation factor 3 (eIF-3) complex, which is involved in protein synthesis of a specialized repertoire of mRNAs and, together with other initiation factors, stimulates binding of mRNA and methionyl-tRNAi to the 40S ribosome. The eIF-3 complex specifically targets and initiates translation of a subset of mRNAs involved in cell proliferation (Potential). Negatively regulates translation during flower development. This Arabidopsis thaliana (Mouse-ear cress) protein is Eukaryotic translation initiation factor 3 subunit E.